The chain runs to 341 residues: Farnesyl pyrophosphate synthase 2 (341 aa).

Isopentenyl diphosphate contacts are provided by K46, R49, and Q85. D92 and D96 together coordinate Mg(2+). A dimethylallyl diphosphate-binding site is contributed by R101. Isopentenyl diphosphate is bound at residue R102. Residues K189, T190, Q228, K245, and K254 each coordinate dimethylallyl diphosphate.

It belongs to the FPP/GGPP synthase family. It depends on Mg(2+) as a cofactor. As to expression, mainly expressed in trichomes, roots and flowers, and, to a lower extent, in leaves and stems.

It localises to the cytoplasm. Its subcellular location is the nucleus. It catalyses the reaction isopentenyl diphosphate + dimethylallyl diphosphate = (2E)-geranyl diphosphate + diphosphate. The catalysed reaction is isopentenyl diphosphate + (2E)-geranyl diphosphate = (2E,6E)-farnesyl diphosphate + diphosphate. It functions in the pathway isoprenoid biosynthesis; farnesyl diphosphate biosynthesis; farnesyl diphosphate from geranyl diphosphate and isopentenyl diphosphate: step 1/1. It participates in sesquiterpene biosynthesis. The protein operates within isoprenoid biosynthesis; geranyl diphosphate biosynthesis; geranyl diphosphate from dimethylallyl diphosphate and isopentenyl diphosphate: step 1/1. Functionally, catalyzes the sequential condensation of isopentenyl pyrophosphate with the allylic pyrophosphates, dimethylallyl pyrophosphate, and then with the resultant geranylpyrophosphate to the ultimate product farnesyl pyrophosphate. This Cannabis sativa (Hemp) protein is Farnesyl pyrophosphate synthase 2.